Consider the following 4662-residue polypeptide: Protein PF3D7_1417600 (4662 aa).

The next 2 membrane-spanning stretches (helical) occupy residues isoleucine 136 to isoleucine 156 and tyrosine 161 to isoleucine 181. An LRR 1 repeat occupies isoleucine 466–asparagine 489. Residues tyrosine 583 to glutamate 710 form a disordered region. The segment covering asparagine 590–asparagine 644 has biased composition (low complexity). Basic and acidic residues predominate over residues aspartate 650–glutamate 666. Positions lysine 690–lysine 701 are enriched in basic residues. The region spanning tyrosine 783–phenylalanine 856 is the HSA domain. The segment at glycine 942 to asparagine 967 is disordered. The stretch at asparagine 1150 to tyrosine 1172 is one LRR 2 repeat. Residues asparagine 1505–asparagine 1524 show a composition bias toward low complexity. Disordered stretches follow at residues asparagine 1505–serine 1540 and lysine 1705–aspartate 1761. The span at asparagine 1710–aspartate 1761 shows a compositional bias: basic and acidic residues. LRR repeat units follow at residues isoleucine 2063–lysine 2086 and aspartate 2129–aspartate 2153. The interval lysine 2228–glutamate 2261 is disordered. The segment covering lysine 2230–isoleucine 2241 has biased composition (basic residues). Over residues glutamate 2246–glutamate 2261 the composition is skewed to acidic residues. LRR repeat units follow at residues leucine 2672–aspartate 2695, asparagine 2773–isoleucine 2796, isoleucine 2864–asparagine 2888, and alanine 2904–serine 2929. The segment at methionine 2956–asparagine 2975 is disordered. LRR repeat units lie at residues glutamine 3377–methionine 3400, asparagine 3438–serine 3461, serine 3756–asparagine 3781, glutamine 3935–asparagine 3960, glutamine 3965–glutamine 3985, and proline 3986–asparagine 4010. A coiled-coil region spans residues aspartate 4203–glutamine 4272. LRR repeat units follow at residues tyrosine 4296–lysine 4321 and glutamine 4333–glutamine 4357. Residues glutamine 4384–glutamine 4412 are disordered.

It localises to the membrane. The sequence is that of Protein PF3D7_1417600 from Plasmodium falciparum (isolate 3D7).